An 84-amino-acid polypeptide reads, in one-letter code: Defensin-like protein 140 (84 aa).

The N-terminal stretch at methionine 1 to glycine 28 is a signal peptide. 4 disulfide bridges follow: cysteine 37–cysteine 81, cysteine 46–cysteine 65, cysteine 51–cysteine 75, and cysteine 55–cysteine 77.

Belongs to the DEFL family.

The protein resides in the secreted. This chain is Defensin-like protein 140 (LCR15), found in Arabidopsis thaliana (Mouse-ear cress).